Consider the following 545-residue polypeptide: Cannabidiolic acid synthase-like 2 (545 aa).

The N-terminal stretch at 1–28 (MKCSTFCFWYVCKIIFFFLSFNIQISIA) is a signal peptide. A disulfide bridge links Cys-37 with Cys-99. Residues Asn-45, Asn-65, Asn-89, and Asn-168 are each glycosylated (N-linked (GlcNAc...) asparagine). The 175-residue stretch at 77–251 (TTPKPLVITT…AAWKIRLVAV (175 aa)) folds into the FAD-binding PCMH-type domain. A cross-link (6-(S-cysteinyl)-8alpha-(pros-histidyl)-FAD (His-Cys)) is located at residues 114-176 (HDAEGMSYIS…ENLSFPAGYC (63 aa)). His-292 contacts substrate. Residues Asn-297, Asn-305, Asn-329, and Asn-361 are each glycosylated (N-linked (GlcNAc...) asparagine). Tyr-417 serves as a coordination point for substrate. Asn-467 carries N-linked (GlcNAc...) asparagine glycosylation. Residue Tyr-484 is the Proton acceptor of the active site. An N-linked (GlcNAc...) asparagine glycan is attached at Asn-499.

The protein belongs to the oxygen-dependent FAD-linked oxidoreductase family. FAD serves as cofactor. The FAD cofactor is bound via a bicovalent 6-S-cysteinyl, 8alpha-N1-histidyl FAD linkage.

Its subcellular location is the secreted. Its function is as follows. Has no cannabidiolic acid synthase activity. The protein is Cannabidiolic acid synthase-like 2 (CBDAS3) of Cannabis sativa (Hemp).